A 110-amino-acid chain; its full sequence is UPF0060 membrane protein Mmwyl1_1139 (110 aa).

4 consecutive transmembrane segments (helical) span residues 7–27, 33–53, 63–83, and 87–107; these read ISLFMLTALAEIIGCYLPYLW, TIWLLVPAALSLAVFTWLLTL, AAYGGVYIFMAVLWLWIVDGI, and TWDMIGSAVALLGMAIIMFAP.

It belongs to the UPF0060 family.

The protein resides in the cell inner membrane. The protein is UPF0060 membrane protein Mmwyl1_1139 of Marinomonas sp. (strain MWYL1).